A 309-amino-acid chain; its full sequence is tRNA dimethylallyltransferase (309 aa).

14-21 contacts ATP; that stretch reads GPTASGKS. 16 to 21 contacts substrate; sequence TASGKS. Residues 39 to 42 are interaction with substrate tRNA; the sequence is DSMQ.

It belongs to the IPP transferase family. As to quaternary structure, monomer. Mg(2+) serves as cofactor.

It catalyses the reaction adenosine(37) in tRNA + dimethylallyl diphosphate = N(6)-dimethylallyladenosine(37) in tRNA + diphosphate. Functionally, catalyzes the transfer of a dimethylallyl group onto the adenine at position 37 in tRNAs that read codons beginning with uridine, leading to the formation of N6-(dimethylallyl)adenosine (i(6)A). In Geobacter metallireducens (strain ATCC 53774 / DSM 7210 / GS-15), this protein is tRNA dimethylallyltransferase.